The following is a 298-amino-acid chain: Bifunctional protein FolD (298 aa).

Residues 166–168, serine 191, and isoleucine 232 each bind NADP(+); that span reads GRS.

Belongs to the tetrahydrofolate dehydrogenase/cyclohydrolase family. Homodimer.

It carries out the reaction (6R)-5,10-methylene-5,6,7,8-tetrahydrofolate + NADP(+) = (6R)-5,10-methenyltetrahydrofolate + NADPH. The catalysed reaction is (6R)-5,10-methenyltetrahydrofolate + H2O = (6R)-10-formyltetrahydrofolate + H(+). The protein operates within one-carbon metabolism; tetrahydrofolate interconversion. In terms of biological role, catalyzes the oxidation of 5,10-methylenetetrahydrofolate to 5,10-methenyltetrahydrofolate and then the hydrolysis of 5,10-methenyltetrahydrofolate to 10-formyltetrahydrofolate. This Maricaulis maris (strain MCS10) (Caulobacter maris) protein is Bifunctional protein FolD.